The following is a 360-amino-acid chain: SPRY domain-containing SOCS box protein 3 (360 aa).

The disordered stretch occupies residues 20–55 (RDQDARSPTLPAEEEAWGYDSDGQHSNSDSDTDLLH). The 190-residue stretch at 85-274 (LHTFHQIKSC…MKVIRSCCCR (190 aa)) folds into the B30.2/SPRY domain. Positions 264–315 (SMKVIRSCCCRTSLQYLCCARLRQLLPDSVDSLEVLPLPPGLKQVLGNKLGW) constitute an SOCS box domain. Residues 323–350 (RSNQHKGDTSATTSCGSDSDSSCTPGQD) are disordered. Positions 331–346 (TSATTSCGSDSDSSCT) are enriched in low complexity.

It belongs to the SPSB family. In terms of assembly, substrate-recognition component of the ECS(SPSB3) complex, composed of spsb3, cul5, elob, elob and rnf7/rbx2.

Its subcellular location is the nucleus. It functions in the pathway protein modification; protein ubiquitination. Its function is as follows. Substrate-recognition component of a cullin-5-RING E3 ubiquitin-protein ligase complex (ECS complex, also named CRL5 complex), which mediates the ubiquitination and subsequent proteasomal degradation of target proteins. The polypeptide is SPRY domain-containing SOCS box protein 3 (spsb3) (Xenopus tropicalis (Western clawed frog)).